The chain runs to 279 residues: Troponin T, fast skeletal muscle (279 aa).

A compositionally biased stretch (acidic residues) spans 1 to 21; it reads MSDEEVEHVEEQYEEEEEAQE. The disordered stretch occupies residues 1-82; sequence MSDEEVEHVE…EKVDFDDIQK (82 aa). Serine 2 is modified (N-acetylserine). Serine 2 bears the Phosphoserine mark. 2 stretches are compositionally biased toward basic and acidic residues: residues 28–49 and 70–82; these read EVHE…ALED and PEGE…DIQK. Serine 98 carries the phosphoserine modification. Positions 121–163 are enriched in basic and acidic residues; the sequence is RAERAEQQRIRAEKERERQNRLAEEKARREEEDAKRRAEEDLK. The tract at residues 121-200 is disordered; sequence RAERAEQQRI…TAREMKKKIL (80 aa). A phosphoserine mark is found at serine 169, serine 176, and serine 177. Positions 191 to 200 are enriched in basic and acidic residues; that stretch reads TAREMKKKIL. Serine 213 bears the Phosphoserine mark. Residue tyrosine 229 is modified to Phosphotyrosine.

This sequence belongs to the troponin T family.

In terms of biological role, troponin T is the tropomyosin-binding subunit of troponin, the thin filament regulatory complex which confers calcium-sensitivity to striated muscle actomyosin ATPase activity. The chain is Troponin T, fast skeletal muscle (TNNT3) from Oryctolagus cuniculus (Rabbit).